Consider the following 195-residue polypeptide: Probable septum site-determining protein MinC (195 aa).

It belongs to the MinC family. As to quaternary structure, interacts with MinD and FtsZ.

Cell division inhibitor that blocks the formation of polar Z ring septums. Rapidly oscillates between the poles of the cell to destabilize FtsZ filaments that have formed before they mature into polar Z rings. Prevents FtsZ polymerization. This Helicobacter pylori (strain G27) protein is Probable septum site-determining protein MinC.